The following is a 90-amino-acid chain: Small ribosomal subunit protein uS15 (90 aa).

It belongs to the universal ribosomal protein uS15 family. Part of the 30S ribosomal subunit. Forms a bridge to the 50S subunit in the 70S ribosome, contacting the 23S rRNA.

One of the primary rRNA binding proteins, it binds directly to 16S rRNA where it helps nucleate assembly of the platform of the 30S subunit by binding and bridging several RNA helices of the 16S rRNA. Functionally, forms an intersubunit bridge (bridge B4) with the 23S rRNA of the 50S subunit in the ribosome. This chain is Small ribosomal subunit protein uS15, found in Campylobacter jejuni subsp. jejuni serotype O:6 (strain 81116 / NCTC 11828).